We begin with the raw amino-acid sequence, 81 residues long: MKTLLLTLVVVTIVCLDLGYTLKCNKLVPLFYKTCPAGKNLCYKMFMVATPKVPVKRGCIDVCPKSSLLVKYVCCNTDRCN.

A signal peptide spans M1–T21. 4 cysteine pairs are disulfide-bonded: C24–C42, C35–C59, C63–C74, and C75–C80.

The protein belongs to the three-finger toxin family. Short-chain subfamily. Type IA cytotoxin sub-subfamily. Monomer in solution; Homodimer and oligomer in the presence of negatively charged lipids forming a pore with a size ranging between 20 and 30 Angstroms. Interacts with Kv channel-interacting protein 1 (KCNIP1) in a calcium-independent manner. Expressed by the venom gland.

It is found in the secreted. The protein resides in the target cell membrane. Functionally, basic protein that binds to cell membrane and depolarizes cardiomyocytes. This cytotoxin also possesses lytic activity on many other cells, including red blood cells. Interaction with sulfatides in the cell membrane induces pore formation and cell internalization. Cytotoxicity is due to pore formation, and to another mechanism independent of membrane-damaging activity. When internalized, it targets the mitochondrial membrane and induces mitochondrial swelling and fragmentation. It inhibits protein kinases C. It binds to the integrin alpha-V/beta-3 (ITGAV/ITGB3) with a moderate affinity. It also binds with high affinity to heparin. The polypeptide is Cytotoxin 3 (Naja atra (Chinese cobra)).